The sequence spans 458 residues: 5'-adenylylsulfate reductase 3, chloroplastic (458 aa).

Residues 1–24 (MALAINVSSSSSSAISSSSFPSSD) are disordered. The transit peptide at 1–69 (MALAINVSSS…VQSITKESIV (69 aa)) directs the protein to the chloroplast. A compositionally biased stretch (low complexity) spans 8–23 (SSSSSSAISSSSFPSS). The interval 70–319 (ASEVTEKLDV…KAKECGLHKG (250 aa)) is reductase domain. Residues 337–458 (ASVADIFNSE…SLTSFLNLVR (122 aa)) form the Thioredoxin domain. Residues C378 and C381 each act as nucleophile in the active site. Residues C378 and C381 are joined by a disulfide bond.

Belongs to the APS reductase family. It depends on [4Fe-4S] cluster as a cofactor. Leaves, roots and stem.

It localises to the plastid. The protein resides in the chloroplast. The catalysed reaction is glutathione disulfide + sulfite + AMP + 2 H(+) = adenosine 5'-phosphosulfate + 2 glutathione. Its activity is regulated as follows. Stimulated by sodium sulfate &gt; ammonium sulfate. Functionally, reduces sulfate for Cys biosynthesis. Substrate preference is adenosine-5'-phosphosulfate (APS) &gt;&gt; 3'-phosphoadenosine-5'-phosphosulfate (PAPS). Uses glutathione or DTT as source of protons. The protein is 5'-adenylylsulfate reductase 3, chloroplastic (APR3) of Arabidopsis thaliana (Mouse-ear cress).